Reading from the N-terminus, the 310-residue chain is Putative HTH-type transcriptional regulatory protein LS215_1371 (310 aa).

An HTH cro/C1-type domain is found at 125–180; it reads LKHKREEMGYSIGDVAKFLGVSRKAIYDYEKGDSDVSLEVAEKLIDLFGDDIIGDV. A DNA-binding region (H-T-H motif) is located at residues 136–155; it reads IGDVAKFLGVSRKAIYDYEK.

The polypeptide is Putative HTH-type transcriptional regulatory protein LS215_1371 (Saccharolobus islandicus (strain L.S.2.15 / Lassen #1) (Sulfolobus islandicus)).